The sequence spans 367 residues: Forkhead box protein I2-B (367 aa).

Over residues 31–40 the composition is skewed to low complexity; it reads QQQNQQLPQR. Positions 31–51 are disordered; the sequence is QQQNQQLPQRPAAPPAPGYGL. Positions 124–218 form a DNA-binding region, fork-head; it reads RPPYSYSSLI…DNGNFRRKRK (95 aa). The disordered stretch occupies residues 224-254; that stretch reads VGAGFDEESNEDKKPLALKSLGPDSPGGASV.

It is found in the nucleus. Its function is as follows. Possible transcriptional activator. This is Forkhead box protein I2-B (foxi2-b) from Xenopus laevis (African clawed frog).